The primary structure comprises 462 residues: Gamma-glutamylethanolamide synthetase GlnA4 (462 aa).

The region spanning 30–126 (GDIDTVVLAF…AVADLAWEDG (97 aa)) is the GS beta-grasp domain. One can recognise a GS catalytic domain in the interval 133 to 462 (PRQILRRQLE…WELRRSFERM (330 aa)). Mg(2+) contacts are provided by Glu-156 and Glu-158. Glu-214 lines the ATP pocket. Glu-219 and Glu-226 together coordinate Mg(2+). Position 270 (Gly-270) interacts with L-glutamate. His-274 lines the Mg(2+) pocket. ATP is bound at residue 276-278 (HLS). 2 residues coordinate L-glutamate: Arg-325 and Arg-343. Residues Arg-343 and Arg-348 each coordinate ATP. Mg(2+) is bound at residue Glu-359. Position 361 (Arg-361) interacts with L-glutamate.

Belongs to the glutamine synthetase family. Requires Mg(2+) as cofactor.

The catalysed reaction is ethanolamine + L-glutamate + ATP = gamma-L-glutamylethanolamide + ADP + phosphate + H(+). The protein operates within amine and polyamine degradation; ethanolamine degradation. Very slightly decreased activity with glutamine synthetase (GS) inhibitor methionine sulfoximine (MSO). In terms of biological role, involved in the catabolism of monoamine ethanolamine. Catalyzes the ATP-dependent gamma-glutamylation of ethanolamine. No activity with polyamines. No complementation of the L-glutamine auxotrophy of an E.coli glnA mutant. Enables survival of S.coelicolor under high local environmental ethanolamine conditions. May play a role during starvation conditions to limit intracellular ethanolamine concentration, which in excess is toxic to the cells. The chain is Gamma-glutamylethanolamide synthetase GlnA4 from Streptomyces coelicolor (strain ATCC BAA-471 / A3(2) / M145).